Here is a 275-residue protein sequence, read N- to C-terminus: 4-hydroxy-tetrahydrodipicolinate reductase (275 aa).

Residues 13–18 (GAAGKM) and 108–110 (GTT) each bind NAD(+). His-164 (proton donor/acceptor) is an active-site residue. His-165 provides a ligand contact to (S)-2,3,4,5-tetrahydrodipicolinate. The active-site Proton donor is Lys-168. 174 to 175 (GT) contacts (S)-2,3,4,5-tetrahydrodipicolinate.

Belongs to the DapB family.

Its subcellular location is the cytoplasm. It catalyses the reaction (S)-2,3,4,5-tetrahydrodipicolinate + NAD(+) + H2O = (2S,4S)-4-hydroxy-2,3,4,5-tetrahydrodipicolinate + NADH + H(+). The catalysed reaction is (S)-2,3,4,5-tetrahydrodipicolinate + NADP(+) + H2O = (2S,4S)-4-hydroxy-2,3,4,5-tetrahydrodipicolinate + NADPH + H(+). Its pathway is amino-acid biosynthesis; L-lysine biosynthesis via DAP pathway; (S)-tetrahydrodipicolinate from L-aspartate: step 4/4. In terms of biological role, catalyzes the conversion of 4-hydroxy-tetrahydrodipicolinate (HTPA) to tetrahydrodipicolinate. The polypeptide is 4-hydroxy-tetrahydrodipicolinate reductase (Acaryochloris marina (strain MBIC 11017)).